The primary structure comprises 82 residues: Cytochrome b559 subunit alpha (82 aa).

The chain crosses the membrane as a helical span at residues 22–36; the sequence is VIHAITLPSIFLAGF. Position 24 (H24) interacts with heme.

Belongs to the PsbE/PsbF family. In terms of assembly, heterodimer of an alpha subunit and a beta subunit. PSII is composed of 1 copy each of membrane proteins PsbA, PsbB, PsbC, PsbD, PsbE, PsbF, PsbH, PsbI, PsbJ, PsbK, PsbL, PsbM, PsbT, PsbX, PsbY, PsbZ, Psb30/Ycf12, peripheral proteins PsbO, CyanoQ (PsbQ), PsbU, PsbV and a large number of cofactors. It forms dimeric complexes. It depends on heme b as a cofactor.

It localises to the cellular thylakoid membrane. Its function is as follows. This b-type cytochrome is tightly associated with the reaction center of photosystem II (PSII). PSII is a light-driven water:plastoquinone oxidoreductase that uses light energy to abstract electrons from H(2)O, generating O(2) and a proton gradient subsequently used for ATP formation. It consists of a core antenna complex that captures photons, and an electron transfer chain that converts photonic excitation into a charge separation. This Synechococcus sp. (strain CC9311) protein is Cytochrome b559 subunit alpha.